The following is a 331-amino-acid chain: Phospholipase A2 inhibitor (331 aa).

The first 23 residues, M1–Q23, serve as a signal peptide directing secretion. An N-linked (GlcNAc...) asparagine glycan is attached at N35. LRR repeat units follow at residues L78–N101, P103–N125, S127–T149, L150–K173, K175–G197, D199–W221, P223–P244, and L245–T268. Residue N125 is glycosylated (N-linked (GlcNAc...) asparagine). A glycan (N-linked (GlcNAc...) asparagine) is linked at N232. Residue N271 is glycosylated (N-linked (GlcNAc...) asparagine). In terms of domain architecture, LRRCT spans N279–P330.

As to quaternary structure, homotrimer.

It localises to the secreted. Functionally, inhibits the enzymatic activity of the basic phospholipase A2 (PLA2). The polypeptide is Phospholipase A2 inhibitor (Gloydius brevicaudus siniticus (Chinese mamushi)).